Consider the following 447-residue polypeptide: Probable alpha-galactosidase B (447 aa).

An N-terminal signal peptide occupies residues 1–25; sequence MTTFFSLTTAAAVLTLARGSNALVR. 2 cysteine pairs are disulfide-bonded: Cys45–Cys77 and Cys127–Cys157. Asp155 functions as the Nucleophile in the catalytic mechanism. N-linked (GlcNAc...) asparagine glycans are attached at residues Asn162 and Asn180. 225–229 provides a ligand contact to substrate; it reads EWGQA. N-linked (GlcNAc...) asparagine glycosylation is present at Asn236. The active-site Proton donor is Asp247. Asn286 is a glycosylation site (N-linked (GlcNAc...) asparagine).

This sequence belongs to the glycosyl hydrolase 27 family.

It localises to the secreted. It carries out the reaction Hydrolysis of terminal, non-reducing alpha-D-galactose residues in alpha-D-galactosides, including galactose oligosaccharides, galactomannans and galactolipids.. In terms of biological role, hydrolyzes a variety of simple alpha-D-galactoside as well as more complex molecules such as oligosaccharides and polysaccharides. The protein is Probable alpha-galactosidase B (aglB) of Aspergillus fumigatus (strain ATCC MYA-4609 / CBS 101355 / FGSC A1100 / Af293) (Neosartorya fumigata).